The following is a 460-amino-acid chain: Serine incorporator 5 (460 aa).

Topologically, residues 1–36 (MSARCCAGQLACCCGSAGCALCCGCCPKFRQSRSTR) are extracellular. A helical membrane pass occupies residues 37 to 57 (FMYLFYFTLVIIPCCVMMSPS). The Cytoplasmic segment spans residues 58 to 89 (VMKQMTEHIPFFEDFCKGIKAGDTCENLVGYS). A helical transmembrane segment spans residues 90–110 (AVYRVCFGMACFFFVFCVLTF). Topologically, residues 111 to 124 (KVNNSKSCRASIHN) are extracellular. N-linked (GlcNAc...) asparagine glycosylation occurs at Asn-113. A helical transmembrane segment spans residues 125-145 (GFWFFKLLLLGAMCSGAFFIP). At 146 to 156 (DQETFLNVWRY) the chain is on the cytoplasmic side. Residues 157 to 177 (VGAVGSFFFICIQLLLIVEFA) traverse the membrane as a helical segment. The Extracellular segment spans residues 178–197 (HKWNKNWTAGTVRNKLWYAS). N-linked (GlcNAc...) asparagine glycosylation is present at Asn-183. A helical membrane pass occupies residues 198–218 (LSLALIMYSIAVGGLALMAVF). At 219 to 229 (YTQWDDCMDNK) the chain is on the cytoplasmic side. Residues 230–250 (ILLGVHGGLCVLISLAAISPC) form a helical membrane-spanning segment. The Extracellular portion of the chain corresponds to 251-258 (VQNRQPHS). Residues 259 to 279 (GLLQPGLISCYVTYLTFSALT) form a helical membrane-spanning segment. The Cytoplasmic portion of the chain corresponds to 280–309 (SKPEKVVKDEHGKNVTICVPDFGQDFRRDE). The helical transmembrane segment at 310-330 (SMVTWLGTLLLVVCISYSCLT) threads the bilayer. Residues 331-390 (STTRSSSDALQRRYGAPELEVARCCFCFGPDGEDTEEQQNVKEGPRVIYDEKKGTVYSYS) lie on the Extracellular side of the membrane. A helical membrane pass occupies residues 391–411 (YFHFVLLLASLYVMMTLTSWF). Over 412–427 (HYENATIETFFVGSWS) the chain is Cytoplasmic. The helical transmembrane segment at 428–448 (IFWVKMASCWMCVLLYLWTLV) threads the bilayer. Residues 449–460 (APLCCPSRQFSV) are Extracellular-facing.

This sequence belongs to the TDE1 family. As to expression, brain. Expressed at high levels in the white matter and the oligodendroglial cells of the brain. Expressed at low levels in the liver.

Its subcellular location is the cell membrane. It carries out the reaction a 1,2-diacyl-sn-glycero-3-phospho-L-serine(in) = a 1,2-diacyl-sn-glycero-3-phospho-L-serine(out). It catalyses the reaction a 1,2-diacyl-sn-glycero-3-phosphocholine(in) = a 1,2-diacyl-sn-glycero-3-phosphocholine(out). The catalysed reaction is a 1,2-diacyl-sn-glycero-3-phosphoethanolamine(in) = a 1,2-diacyl-sn-glycero-3-phosphoethanolamine(out). In terms of biological role, restriction factor required to restrict infectivity of gammaretroviruses: acts by inhibiting an early step of viral infection. Impairs the penetration of the viral particle into the cytoplasm. Non-ATP-dependent, non-specific lipid transporter for phosphatidylserine, phosphatidylcholine, and phosphatidylethanolamine. Functions as a scramblase that flips lipids in both directions across the membrane. Phospholipid scrambling results in gammaretroviral surface exposure of phosphatidylserine and loss of membrane asymmetry, which leads to loss of infectivity. Enhances the incorporation of serine into phosphatidylserine and sphingolipids. May play a role in providing serine molecules for the formation of myelin glycosphingolipids in oligodendrocytes. This is Serine incorporator 5 (Serinc5) from Rattus norvegicus (Rat).